We begin with the raw amino-acid sequence, 431 residues long: uncharacterized protein (431 aa).

Helical transmembrane passes span 42–62 (LLIG…IGCL) and 74–94 (VMIF…ATML). A glycan (N-linked (GlcNAc...) asparagine; by host) is linked at asparagine 105. 5 helical membrane passes run 111–131 (LVLF…LFLI), 153–173 (AGVA…AAVP), 202–222 (MWFL…ELAY), 236–256 (VCTF…FRVL), and 279–299 (ATRT…IAFF).

The protein resides in the membrane. This is an uncharacterized protein from Homo sapiens (Human).